The following is a 413-amino-acid chain: Serine hydroxymethyltransferase (413 aa).

(6S)-5,6,7,8-tetrahydrofolate is bound by residues leucine 117 and 121–123; that span reads GHL. The residue at position 226 (lysine 226) is an N6-(pyridoxal phosphate)lysine. (6S)-5,6,7,8-tetrahydrofolate contacts are provided by residues glutamate 241 and 349 to 351; that span reads SPF.

This sequence belongs to the SHMT family. In terms of assembly, homodimer. Pyridoxal 5'-phosphate serves as cofactor.

The protein localises to the cytoplasm. It catalyses the reaction (6R)-5,10-methylene-5,6,7,8-tetrahydrofolate + glycine + H2O = (6S)-5,6,7,8-tetrahydrofolate + L-serine. It functions in the pathway one-carbon metabolism; tetrahydrofolate interconversion. It participates in amino-acid biosynthesis; glycine biosynthesis; glycine from L-serine: step 1/1. Its function is as follows. Catalyzes the reversible interconversion of serine and glycine with tetrahydrofolate (THF) serving as the one-carbon carrier. This reaction serves as the major source of one-carbon groups required for the biosynthesis of purines, thymidylate, methionine, and other important biomolecules. Also exhibits THF-independent aldolase activity toward beta-hydroxyamino acids, producing glycine and aldehydes, via a retro-aldol mechanism. In Halalkalibacterium halodurans (strain ATCC BAA-125 / DSM 18197 / FERM 7344 / JCM 9153 / C-125) (Bacillus halodurans), this protein is Serine hydroxymethyltransferase.